A 124-amino-acid chain; its full sequence is Small ribosomal subunit protein uS13 (124 aa).

Residues 87–124 (GSYRGNRHRKRLPVRGQRTKTNSRTRKGKRRTVGSKTK) are disordered. The span at 91–124 (GNRHRKRLPVRGQRTKTNSRTRKGKRRTVGSKTK) shows a compositional bias: basic residues.

It belongs to the universal ribosomal protein uS13 family. As to quaternary structure, part of the 30S ribosomal subunit. Forms a loose heterodimer with protein S19. Forms two bridges to the 50S subunit in the 70S ribosome.

Located at the top of the head of the 30S subunit, it contacts several helices of the 16S rRNA. In the 70S ribosome it contacts the 23S rRNA (bridge B1a) and protein L5 of the 50S subunit (bridge B1b), connecting the 2 subunits; these bridges are implicated in subunit movement. Contacts the tRNAs in the A and P-sites. The chain is Small ribosomal subunit protein uS13 from Elusimicrobium minutum (strain Pei191).